An 89-amino-acid polypeptide reads, in one-letter code: UPF0175 protein ssl1255 (89 aa).

The protein belongs to the UPF0175 family.

The sequence is that of UPF0175 protein ssl1255 from Synechocystis sp. (strain ATCC 27184 / PCC 6803 / Kazusa).